Consider the following 130-residue polypeptide: Small ribosomal subunit protein uS9 (130 aa).

This sequence belongs to the universal ribosomal protein uS9 family.

The chain is Small ribosomal subunit protein uS9 from Pseudomonas syringae pv. tomato (strain ATCC BAA-871 / DC3000).